Here is a 329-residue protein sequence, read N- to C-terminus: Peroxidase 50 (329 aa).

A signal peptide spans methionine 1–alanine 25. Intrachain disulfides connect cysteine 36–cysteine 119, cysteine 69–cysteine 74, cysteine 125–cysteine 325, and cysteine 204–cysteine 236. The active-site Proton acceptor is histidine 67. The Ca(2+) site is built by aspartate 68, valine 71, glycine 73, aspartate 75, and serine 77. Proline 167 contributes to the substrate binding site. Residue histidine 197 coordinates heme b. Ca(2+) is bound at residue threonine 198. N-linked (GlcNAc...) asparagine glycosylation is present at asparagine 215. Ca(2+) is bound by residues aspartate 249, threonine 252, and aspartate 257.

It belongs to the peroxidase family. Classical plant (class III) peroxidase subfamily. It depends on heme b as a cofactor. Ca(2+) is required as a cofactor. In terms of tissue distribution, expressed in roots and leaves.

The protein localises to the secreted. The catalysed reaction is 2 a phenolic donor + H2O2 = 2 a phenolic radical donor + 2 H2O. Removal of H(2)O(2), oxidation of toxic reductants, biosynthesis and degradation of lignin, suberization, auxin catabolism, response to environmental stresses such as wounding, pathogen attack and oxidative stress. These functions might be dependent on each isozyme/isoform in each plant tissue. Functionally, exhibits a Ca(2+)-pectate binding affinity which could be interpreted in vivo as a specificity to interact with the pectic structure of the cell wall. The polypeptide is Peroxidase 50 (PER50) (Arabidopsis thaliana (Mouse-ear cress)).